Reading from the N-terminus, the 120-residue chain is Protein Wnt-9 (120 aa).

A lipid anchor (O-palmitoleoyl serine; by PORCN) is attached at serine 1. A disulfide bond links cysteine 90 and cysteine 101.

It belongs to the Wnt family. In terms of processing, palmitoleoylation is required for efficient binding to frizzled receptors. Depalmitoleoylation leads to Wnt signaling pathway inhibition.

Its subcellular location is the secreted. It localises to the extracellular space. The protein resides in the extracellular matrix. Functionally, ligand for members of the frizzled family of seven transmembrane receptors. Probable developmental protein. May be a signaling molecule which affects the development of discrete regions of tissues. Is likely to signal over only few cell diameters. The polypeptide is Protein Wnt-9 (WNT-9) (Alopias vulpinus (Common thresher shark)).